Here is a 754-residue protein sequence, read N- to C-terminus: 1,4-alpha-glucan branching enzyme GlgB (754 aa).

Residue D431 is the Nucleophile of the active site. E484 (proton donor) is an active-site residue.

It belongs to the glycosyl hydrolase 13 family. GlgB subfamily. As to quaternary structure, monomer.

It carries out the reaction Transfers a segment of a (1-&gt;4)-alpha-D-glucan chain to a primary hydroxy group in a similar glucan chain.. The protein operates within glycan biosynthesis; glycogen biosynthesis. Functionally, catalyzes the formation of the alpha-1,6-glucosidic linkages in glycogen by scission of a 1,4-alpha-linked oligosaccharide from growing alpha-1,4-glucan chains and the subsequent attachment of the oligosaccharide to the alpha-1,6 position. In Prochlorococcus marinus (strain AS9601), this protein is 1,4-alpha-glucan branching enzyme GlgB.